The following is a 511-amino-acid chain: Mesoderm induction early response protein 1 (511 aa).

Low complexity predominate over residues 1–16; that stretch reads MAEPSVESSSPGGSAT. The tract at residues 1–171 is disordered; it reads MAEPSVESSS…EEESEEDEDY (171 aa). At Ser-10 the chain carries Phosphoserine. Positions 17–36 are enriched in basic and acidic residues; the sequence is SEDHEFDPSADMLVHDFDDE. Residues 37–46 show a composition bias toward acidic residues; that stretch reads RTLEEEEMME. Residues 57 to 66 are compositionally biased toward basic and acidic residues; sequence DLAREGDMPI. The span at 83–104 shows a compositional bias: acidic residues; that stretch reads EEEEEEEEEEEGEDDEDADNDD. Residues 128-143 show a composition bias toward polar residues; that stretch reads QSSNDDPSQSVTSQDA. Phosphoserine is present on Ser-140. Tyr-154 carries the post-translational modification Phosphotyrosine. 2 positions are modified to phosphoserine: Ser-159 and Ser-165. Residues 159–171 show a composition bias toward acidic residues; sequence SEIEEESEEDEDY. An ELM2 domain is found at 179–277; that stretch reads KEIMVGSMFQ…EALRRLRFNV (99 aa). Residue Lys-238 forms a Glycyl lysine isopeptide (Lys-Gly) (interchain with G-Cter in SUMO2) linkage. The region spanning 282–334 is the SANT domain; it reads EELSVWTEEECRNFEQGLKAYGKDFHLIQANKVRTRSVGECVAFYYMWKKSER. Residues 365–511 are disordered; sequence ESESAASSRA…KFEEHENTND (147 aa). Phosphoserine is present on residues Ser-366, Ser-368, and Ser-376. A compositionally biased stretch (polar residues) spans 397–408; it reads SSRNQNGVSSNG. Basic and acidic residues-rich tracts occupy residues 413 to 422 and 461 to 474; these read LNKEEVKVEG and ARNE…NERP. Residue Lys-419 forms a Glycyl lysine isopeptide (Lys-Gly) (interchain with G-Cter in SUMO2) linkage. Residues 481 to 493 are compositionally biased toward polar residues; the sequence is NSSGKESPGSSEF. Phosphoserine is present on residues Ser-482, Ser-487, and Ser-490. Residues 499–511 show a composition bias toward basic and acidic residues; it reads SHGKFEEHENTND.

Interacts with HDAC1. Part of a complex containing at least CDYL, MIER1, MIER2, HDAC1 and HDAC2. Ubiquitously expressed. Isoform 1 is only expressed in testis.

It localises to the nucleus. Functionally, transcriptional repressor regulating the expression of a number of genes including SP1 target genes. Probably functions through recruitment of HDAC1 a histone deacetylase involved in chromatin silencing. The polypeptide is Mesoderm induction early response protein 1 (Mier1) (Mus musculus (Mouse)).